The following is a 329-amino-acid chain: Bifunctional muramidase/DL-endopeptidase CwlT (329 aa).

Residues 1–29 (MISKKVVLPLVFSAPFIFFFVLCIVVVMT) form the signal peptide. Residues 59–192 (RFRAVFEKYA…SYVDHVMRYV (134 aa)) are muramidase. In terms of domain architecture, NlpC/P60 spans 206–329 (MDFYETVMKE…DHLVSFGRIK (124 aa)). The active-site Nucleophile is the Cys237. His290 serves as the catalytic Proton acceptor. Residue Asn302 is part of the active site.

Belongs to the peptidase C40 family.

It localises to the secreted. It carries out the reaction Hydrolysis of (1-&gt;4)-beta-linkages between N-acetylmuramic acid and N-acetyl-D-glucosamine residues in a peptidoglycan and between N-acetyl-D-glucosamine residues in chitodextrins.. Its function is as follows. Exhibits both muramidase and DL-endopeptidase activities. The N-terminal region acts as a N-acetylmuramidase, which cleaves the bond between N-acetylmuramic acid and N-acetyl-D-glucosamine (MurNAc-GlcNAc) in peptidoglycan. The C-terminal region acts as a DL-endopeptidase that cleaves the bond between D-gamma-glutamate and meso-diaminopimelic acid. Cannot degrade purified B.anthracis peptidoglycan, which differ from those of B.subtilis. CwlT is required for ICEBs1 conjugation: the muramidase activity is essential, whereas the peptidase activity is partially dispensable for transfer of ICEBs1. In Bacillus subtilis (strain 168), this protein is Bifunctional muramidase/DL-endopeptidase CwlT.